The following is a 427-amino-acid chain: Enolase (427 aa).

Q163 contacts (2R)-2-phosphoglycerate. The active-site Proton donor is the E205. Residues D242, E285, and D312 each coordinate Mg(2+). (2R)-2-phosphoglycerate contacts are provided by K337, R366, S367, and K388. K337 serves as the catalytic Proton acceptor.

This sequence belongs to the enolase family. It depends on Mg(2+) as a cofactor.

Its subcellular location is the cytoplasm. The protein resides in the secreted. It is found in the cell surface. It carries out the reaction (2R)-2-phosphoglycerate = phosphoenolpyruvate + H2O. The protein operates within carbohydrate degradation; glycolysis; pyruvate from D-glyceraldehyde 3-phosphate: step 4/5. Catalyzes the reversible conversion of 2-phosphoglycerate (2-PG) into phosphoenolpyruvate (PEP). It is essential for the degradation of carbohydrates via glycolysis. This is Enolase from Nitrosospira multiformis (strain ATCC 25196 / NCIMB 11849 / C 71).